A 363-amino-acid chain; its full sequence is tRNA dimethylallyltransferase (363 aa).

65–72 (GPTASGKS) serves as a coordination point for ATP. 67–72 (TASGKS) is a binding site for substrate. Interaction with substrate tRNA regions lie at residues 90–93 (DSMQ) and 214–218 (QRLIR).

This sequence belongs to the IPP transferase family. Monomer. Mg(2+) serves as cofactor.

It catalyses the reaction adenosine(37) in tRNA + dimethylallyl diphosphate = N(6)-dimethylallyladenosine(37) in tRNA + diphosphate. Functionally, catalyzes the transfer of a dimethylallyl group onto the adenine at position 37 in tRNAs that read codons beginning with uridine, leading to the formation of N6-(dimethylallyl)adenosine (i(6)A). The polypeptide is tRNA dimethylallyltransferase (Rickettsia massiliae (strain Mtu5)).